The following is a 228-amino-acid chain: uncharacterized protein (228 aa).

This is an uncharacterized protein from Methanocaldococcus jannaschii (strain ATCC 43067 / DSM 2661 / JAL-1 / JCM 10045 / NBRC 100440) (Methanococcus jannaschii).